The chain runs to 337 residues: tRNA N6-adenosine threonylcarbamoyltransferase (337 aa).

The Fe cation site is built by His-111 and His-115. Residues 134 to 138, Asp-167, Gly-180, and Asn-272 each bind substrate; that span reads LVSGG. A Fe cation-binding site is contributed by Asp-300.

The protein belongs to the KAE1 / TsaD family. Fe(2+) serves as cofactor.

It is found in the cytoplasm. It carries out the reaction L-threonylcarbamoyladenylate + adenosine(37) in tRNA = N(6)-L-threonylcarbamoyladenosine(37) in tRNA + AMP + H(+). Required for the formation of a threonylcarbamoyl group on adenosine at position 37 (t(6)A37) in tRNAs that read codons beginning with adenine. Is involved in the transfer of the threonylcarbamoyl moiety of threonylcarbamoyl-AMP (TC-AMP) to the N6 group of A37, together with TsaE and TsaB. TsaD likely plays a direct catalytic role in this reaction. The chain is tRNA N6-adenosine threonylcarbamoyltransferase from Escherichia coli (strain K12 / MC4100 / BW2952).